A 124-amino-acid chain; its full sequence is MARLMGVDLPRDKRMEIALTYIYGIGRTRSQEILEATGISRDMRTKDLTDDQVTQLRDYIEGNLKVEGDLRREVQADIRRKIEIGCYQGLRHRRGLPVRGQRTKTNARTRKGPKRTIAGKKKAR.

Residues 94-124 (RGLPVRGQRTKTNARTRKGPKRTIAGKKKAR) form a disordered region.

This sequence belongs to the universal ribosomal protein uS13 family. As to quaternary structure, part of the 30S ribosomal subunit. Forms a loose heterodimer with protein S19. Forms two bridges to the 50S subunit in the 70S ribosome.

In terms of biological role, located at the top of the head of the 30S subunit, it contacts several helices of the 16S rRNA. In the 70S ribosome it contacts the 23S rRNA (bridge B1a) and protein L5 of the 50S subunit (bridge B1b), connecting the 2 subunits; these bridges are implicated in subunit movement. Contacts the tRNAs in the A and P-sites. This chain is Small ribosomal subunit protein uS13, found in Mycolicibacterium vanbaalenii (strain DSM 7251 / JCM 13017 / BCRC 16820 / KCTC 9966 / NRRL B-24157 / PYR-1) (Mycobacterium vanbaalenii).